The following is a 116-amino-acid chain: Iron-sulfur cluster insertion protein ErpA (116 aa).

3 residues coordinate iron-sulfur cluster: C44, C108, and C110.

This sequence belongs to the HesB/IscA family. In terms of assembly, homodimer. The cofactor is iron-sulfur cluster.

Required for insertion of 4Fe-4S clusters for at least IspG. The sequence is that of Iron-sulfur cluster insertion protein ErpA from Shewanella oneidensis (strain ATCC 700550 / JCM 31522 / CIP 106686 / LMG 19005 / NCIMB 14063 / MR-1).